The primary structure comprises 2221 residues: RNA-directed RNA polymerase L (2221 aa).

An endonuclease region spans residues 29-292 (KTVLLSQVNF…SERETLIEAE (264 aa)). Residues glutamate 54, aspartate 91, and glutamate 104 each contribute to the Mn(2+) site. Lysine 117 is a catalytic residue. A RdRp catalytic domain is found at 1171–1369 (LDMKSVVRLS…YLSSKLNKFI (199 aa)). A Mg(2+)-binding site is contributed by aspartate 1327.

This sequence belongs to the Bunyavirales RNA polymerase family. As to quaternary structure, homomultimer; the oligomeric structure is essential for the polymerase activity. Interacts with nucleoprotein N. Interacts with protein Z; this interaction inhibits viral transcription and replication, Z partially blocks the product exit tunnel for the releasing nascent RNA product. Requires Mn(2+) as cofactor. Mg(2+) is required as a cofactor.

The protein localises to the virion. The protein resides in the host cytoplasm. The catalysed reaction is RNA(n) + a ribonucleoside 5'-triphosphate = RNA(n+1) + diphosphate. In terms of biological role, RNA-dependent RNA polymerase, which is responsible for the replication and transcription of the viral RNA genome using antigenomic RNA as an intermediate. During transcription, synthesizes subgenomic RNAs and assures their capping by a cap-snatching mechanism, which involves the endonuclease activity cleaving the host capped pre-mRNAs. These short capped RNAs are then used as primers for viral transcription. The 3'-end of subgenomic mRNAs molecules are heterogeneous and not polyadenylated. The replicase function is to direct synthesis of antigenomic and genomic RNA which are encapsidated and non capped. As a consequence of the use of the same enzyme for both transcription and replication, these mechanisms need to be well coordinated. These processes may be regulated by proteins N and Z in a dose-dependent manner. Z protein inhibits the viral polymerase L und thus the viral transcription and RNA synthesis. The chain is RNA-directed RNA polymerase L from Sigmodon hispidus (Hispid cotton rat).